We begin with the raw amino-acid sequence, 480 residues long: Cobyric acid synthase (480 aa).

Residues 246-434 enclose the GATase cobBQ-type domain; it reads KILIAVPILP…VHGLFSELAQ (189 aa). The Nucleophile role is filled by Cys328. His426 is an active-site residue.

Belongs to the CobB/CobQ family. CobQ subfamily.

The protein operates within cofactor biosynthesis; adenosylcobalamin biosynthesis. Its function is as follows. Catalyzes amidations at positions B, D, E, and G on adenosylcobyrinic A,C-diamide. NH(2) groups are provided by glutamine, and one molecule of ATP is hydrogenolyzed for each amidation. The chain is Cobyric acid synthase from Methylocella silvestris (strain DSM 15510 / CIP 108128 / LMG 27833 / NCIMB 13906 / BL2).